Consider the following 304-residue polypeptide: Thyroxine 5-deiodinase (304 aa).

The segment at 1–22 (MPRQAASRLVVGEGEGPPGASG) is disordered. Residues 1 to 44 (MPRQAASRLVVGEGEGPPGASGPAATMLRSLLLHSLRLCAQTAS) lie on the Cytoplasmic side of the membrane. The chain crosses the membrane as a helical; Signal-anchor for type II membrane protein span at residues 45–67 (CLVLFPRFLGTAFMLWLLDFLCI). Topologically, residues 68–304 (RKHFLRRRHP…QLHGTRPHRF (237 aa)) are extracellular. Sec-170 is a catalytic residue. A non-standard amino acid (selenocysteine) is located at residue Sec-170.

Belongs to the iodothyronine deiodinase family. In terms of assembly, monomer. Homodimer. May undergo minor heretodimerization with DIO1 and DIO2.

It localises to the cell membrane. The protein resides in the endosome membrane. The catalysed reaction is 3,3',5'-triiodo-L-thyronine + iodide + A + H(+) = L-thyroxine + AH2. The enzyme catalyses 3,3'-diiodo-L-thyronine + iodide + A + H(+) = 3,3',5-triiodo-L-thyronine + AH2. It catalyses the reaction 3-iodo-L-thyronine + iodide + A + H(+) = 3,5-diiodo-L-thyronine + AH2. It carries out the reaction L-thyronine + iodide + A + H(+) = 3-iodo-L-thyronine + AH2. The catalysed reaction is 3',5'-diiodo-L-thyronine + iodide + A + H(+) = 3,3',5'-triiodo-L-thyronine + AH2. The enzyme catalyses 3'-iodo-L-thyronine + iodide + A + H(+) = 3,3'-diiodo-L-thyronine + AH2. It catalyses the reaction 3,3',5'-triiodothyronamine + iodide + A + H(+) = 3,3',5,5'-tetraiodothyronamine + AH2. It carries out the reaction 3',5'-diiodothyronamine + iodide + A + H(+) = 3,3',5'-triiodothyronamine + AH2. The catalysed reaction is 3,3'-diiodothyronamine + iodide + A + H(+) = 3,3',5-triiodothyronamine + AH2. The enzyme catalyses 3-iodothyronamine + iodide + A + H(+) = 3,5-diiodothyronamine + AH2. It catalyses the reaction 3'-iodothyronamine + iodide + A + H(+) = 3,3'-diiodothyronamine + AH2. It carries out the reaction thyronamine + iodide + A + H(+) = 3-iodothyronamine + AH2. Its function is as follows. Plays a crucial role in the metabolism of thyroid hormones (TH) and has specific roles in TH activation and inactivation by deiodination. Catalyzes the deiodination of L-thyroxine (T4) to 3,3',5'-triiodothyronine (rT3), 3,5,3'-triiodothyronine (T3) to 3,3'-diiodothyronine (3,3'-T2), 3,5-diiodothyronine (3,5-T2) to 3-monoiodothyronine (3-T1), rT3 to 3',5'-diiodothyronine (3',5'-T2) and 3,3'-T2 to 3'-monoiodothyronine (3'-T1) via inner-ring deiodination (IRD). Catalyzes the deiodination of 3-T1 to L-thyronine (T0) via outer-ring deiodination (ORD). Catalyzes the tyrosyl ring deiodinations of 3,3',5,5'-tetraiodothyronamine, 3,3',5'-triiodothyronamine, 3,5,3'-triiodothyronamine, 3,5-diiodothyronamine, 3,3'-diiodothyronamine and 3-iodothyronamine. The protein is Thyroxine 5-deiodinase (Dio3) of Mus musculus (Mouse).